Here is a 157-residue protein sequence, read N- to C-terminus: Transcriptional repressor NrdR (157 aa).

Residues Met1 to Asp21 form a disordered region. A zinc finger spans residues Cys3–Cys34. Residues Ser11–Asp21 are compositionally biased toward basic and acidic residues. The ATP-cone domain occupies Leu49–Asp139.

It belongs to the NrdR family. The cofactor is Zn(2+).

Its function is as follows. Negatively regulates transcription of bacterial ribonucleotide reductase nrd genes and operons by binding to NrdR-boxes. This chain is Transcriptional repressor NrdR, found in Sinorhizobium medicae (strain WSM419) (Ensifer medicae).